We begin with the raw amino-acid sequence, 179 residues long: ATP synthase subunit delta (179 aa).

It belongs to the ATPase delta chain family. In terms of assembly, F-type ATPases have 2 components, F(1) - the catalytic core - and F(0) - the membrane proton channel. F(1) has five subunits: alpha(3), beta(3), gamma(1), delta(1), epsilon(1). F(0) has three main subunits: a(1), b(2) and c(10-14). The alpha and beta chains form an alternating ring which encloses part of the gamma chain. F(1) is attached to F(0) by a central stalk formed by the gamma and epsilon chains, while a peripheral stalk is formed by the delta and b chains.

It localises to the cell membrane. Its function is as follows. F(1)F(0) ATP synthase produces ATP from ADP in the presence of a proton or sodium gradient. F-type ATPases consist of two structural domains, F(1) containing the extramembraneous catalytic core and F(0) containing the membrane proton channel, linked together by a central stalk and a peripheral stalk. During catalysis, ATP synthesis in the catalytic domain of F(1) is coupled via a rotary mechanism of the central stalk subunits to proton translocation. Functionally, this protein is part of the stalk that links CF(0) to CF(1). It either transmits conformational changes from CF(0) to CF(1) or is implicated in proton conduction. This is ATP synthase subunit delta from Rubrobacter xylanophilus (strain DSM 9941 / JCM 11954 / NBRC 16129 / PRD-1).